The sequence spans 470 residues: MDIEMAKEPVNPTDTPDIEVTPGLCQPLRRRFRRFVTAKQLYECLRPVFHVTYIHGLTSFYISCDTKTGKKAIKKTIFGYINGIMHIAMFVFAYSLTIYNNCESVASYFFRSRITYFGDLMQIVSGFIGVTVIYLTAFVPNHRLERCLQKFHTMDVQLQTVGVKIMYSKVLRFSYMVLISMFLVNVLFTGGTFSVLYSSEVAPTMALHFTFLIQHTVIAIAIALFSCFTYLVEMRLVMVNKVLKNLAHQWDTRSLKAVNQKQRSLQCLDSFSMYTIVTKDPAEIIQESMEIHHLICEAAATANKYFTYQLLTIISIAFLIIVFDAYYVLETLLGKSKRESKFKTVEFVTFFSCQMILYLIAIISIVEGSNRAIKKSEKTGGIVHSLLNKTKSAEVKEKLQQFSMQLMHLKINFTAAGLFNIDRTLYFTISGALTTYLIILLQFTSNSPNNGYGNGSSCCETFNNMTNHTL.

The Cytoplasmic segment spans residues methionine 1–threonine 76. The chain crosses the membrane as a helical span at residues isoleucine 77–threonine 97. Residues isoleucine 98–aspartate 119 are Extracellular-facing. A helical transmembrane segment spans residues leucine 120 to proline 140. Over asparagine 141–tyrosine 175 the chain is Cytoplasmic. A helical transmembrane segment spans residues methionine 176–leucine 196. Residues tyrosine 197–threonine 204 lie on the Extracellular side of the membrane. A helical transmembrane segment spans residues methionine 205–phenylalanine 225. At serine 226–glutamine 309 the chain is on the cytoplasmic side. A helical membrane pass occupies residues leucine 310–glutamate 330. Residues threonine 331 to glutamate 346 lie on the Extracellular side of the membrane. Residues phenylalanine 347 to glutamate 367 form a helical membrane-spanning segment. At glycine 368 to arginine 423 the chain is on the cytoplasmic side. A helical membrane pass occupies residues threonine 424–threonine 444. The Extracellular portion of the chain corresponds to serine 445 to leucine 470. Asparagine 454, asparagine 464, and asparagine 467 each carry an N-linked (GlcNAc...) asparagine glycan.

It belongs to the insect chemoreceptor superfamily. Gustatory receptor (GR) family. Gr66a subfamily. In terms of tissue distribution, isoforms A and E have taste neuron-specific expression restricted to the labial palps, the internal taste organs in the pharynx, and the legs. In addition to expression in a large number of taste neurons, isoform A is also expressed in a few nonchemosensory neurons, including the campaniform sensilla of the wing, leg stretch receptors, and multiple dendritic neurons in the abdomen. Isoform B is the only receptor not expressed in gustatory receptor neurons in the labellum. We observe expression of this receptor in a single large cell at the base of each maxillary palp, in campaniform sensilla of the wing, and multiple dendritic neurons in the abdomen. Isoform C is expressed by many gustatory receptor neurons in the labial palps, the pharyngeal taste clusters, and taste neurons in the legs. In addition, isoform C expressed in a single cell at the base of the maxillary palps, neurons in the Johnston's organ (JO), campaniform sensilla of the wing, stretch receptors and the femoral chordotonal organ of the legs, and multiple dendritic neurons in the abdomen. Isoform D is expressed in a small number of gustatory receptor neurons in the labial palps, the ventral cibarial sense organ (VCSO), and legs. Atypical expression is observed in three neurons in the arista, campaniform sensilla of the wing, stretch and femoral chordotonal organ receptors in the legs, and multiple dendritic neurons in the abdomen. In larvae, Isoform A is expressed in neurons of the terminal external chemosensory organ and the dorsal external chemosensory organ; and isoform E is expressed in neurons of the terminal external chemosensory organ.

The protein resides in the cell membrane. Its function is as follows. Probable gustatory receptor which mediates acceptance or avoidance behavior, depending on its substrates. Atypical expression also suggests nongustatory roles in the nervous system and tissues involved in proprioception, hygroreception, and other sensory modalities. It is also possible that it has chemosensory roles in the detection of internal ligands. The protein is Putative gustatory receptor 28b (Gr28b) of Drosophila melanogaster (Fruit fly).